The primary structure comprises 646 residues: Interferon-induced GTP-binding protein MxA (646 aa).

Residues 34 to 307 (DLALPAIAVI…LVHHIQKSLP (274 aa)) enclose the Dynamin-type G domain. The interval 44-51 (GDQSSGKS) is G1 motif. 44 to 51 (GDQSSGKS) lines the GTP pocket. The interval 69–71 (VTR) is G2 motif. The tract at residues 145 to 148 (DLPG) is G3 motif. GTP is bound by residues 145–149 (DLPGI) and 214–217 (TKPD). Residues 214 to 217 (TKPD) form a G4 motif region. The interval 246-249 (RCRG) is G5 motif. The region spanning 546–637 (LREMRLHLKS…PLGHLLEVTF (92 aa)) is the GED domain.

Belongs to the TRAFAC class dynamin-like GTPase superfamily. Dynamin/Fzo/YdjA family.

The protein localises to the cytoplasm. The polypeptide is Interferon-induced GTP-binding protein MxA (mxa) (Danio rerio (Zebrafish)).